A 156-amino-acid polypeptide reads, in one-letter code: Transcription elongation factor GreA (156 aa).

A coiled-coil region spans residues 2–78 (AKEIILTQEG…MISKAKLIED (77 aa)).

This sequence belongs to the GreA/GreB family.

Its function is as follows. Necessary for efficient RNA polymerase transcription elongation past template-encoded arresting sites. The arresting sites in DNA have the property of trapping a certain fraction of elongating RNA polymerases that pass through, resulting in locked ternary complexes. Cleavage of the nascent transcript by cleavage factors such as GreA or GreB allows the resumption of elongation from the new 3'terminus. GreA releases sequences of 2 to 3 nucleotides. The chain is Transcription elongation factor GreA from Mesoplasma florum (strain ATCC 33453 / NBRC 100688 / NCTC 11704 / L1) (Acholeplasma florum).